Here is an 811-residue protein sequence, read N- to C-terminus: Lysine-specific histone demethylase 1 homolog 3 (811 aa).

Positions 1 to 10 (MSDQPPPYTP) are enriched in pro residues. The tract at residues 1–79 (MSDQPPPYTP…PSAQPPPRAS (79 aa)) is disordered. Basic residues predominate over residues 44-55 (NKRKRTGFRRKL). Positions 56 to 71 (PSGSPAAPVAVAASPS) are enriched in low complexity. In terms of domain architecture, SWIRM spans 88 to 189 (NREPTAEAVT…FGVAPAIKER (102 aa)). Residues Glu-227, Arg-229, Arg-235, and Glu-609 each contribute to the FAD site. A disordered region spans residues 790 to 811 (RNSSRTKTRPSKLKIGIPKSKS).

Belongs to the flavin monoamine oxidase family. Requires FAD as cofactor.

Probable histone demethylase. The polypeptide is Lysine-specific histone demethylase 1 homolog 3 (Oryza sativa subsp. japonica (Rice)).